A 368-amino-acid polypeptide reads, in one-letter code: E3 ubiquitin-protein ligase E3D (368 aa).

Ala2 bears the N-acetylalanine mark. The short motif at 129–159 (PLPSENWSALVGEWCCHPDPFANRPLHPREN) is the BRAT1-like motif element. Cys144 provides a ligand contact to Zn(2+). Residues 214-236 (RPSEGSFPNIPRSQFLQSIIAQC) are interaction with UBE2C. An HECT-like region spans residues 332-368 (LPSATCLELLLILSRNNASLPLSLRQMNSFQVAFLKM).

In terms of assembly, interacts with UBE2C/UbcH10 (E2 ubiquitin-conjugating enzyme). In vitro, interacts with cyclin-B. Post-translationally, ubiquitinated by UBCH10 (E2 ubiquitin-conjugating enzyme).

It localises to the cytoplasm. The catalysed reaction is S-ubiquitinyl-[E2 ubiquitin-conjugating enzyme]-L-cysteine + [acceptor protein]-L-lysine = [E2 ubiquitin-conjugating enzyme]-L-cysteine + N(6)-ubiquitinyl-[acceptor protein]-L-lysine.. It functions in the pathway protein modification; protein ubiquitination. Functionally, E3 ubiquitin-protein ligase which accepts ubiquitin from specific E2 ubiquitin-conjugating enzymes, and transfers it to substrates, generally promoting their degradation by the proteasome. Independently of its E3 ubiquitin-protein ligase activity, acts as an inhibitor of CPSF3 endonuclease activity by blocking CPSF3 active site. The protein is E3 ubiquitin-protein ligase E3D (Ube3d) of Mus musculus (Mouse).